A 659-amino-acid polypeptide reads, in one-letter code: MNNNDVEDIKKLKYFRLLAKQYPNIALAATEIINLEAILNLPKGTEHFLSDIHGEYEPFVHVLRNGSGVVKRKIEDLFCKSLLESDIKSLATLIYYPEQKLDIVLKEERNIDDWYKITLNRLIEICRFCSSKYTRSKVRKALPADFAYIIEELLHEQFNGIDKEEYYDRIITTIIDIGRAKEFIIALSKLIQRMIIDRLHIIGDIYDRGPRPDIIIDTLMEYHSVDIQWGNHDMLWMGAAAGVRTCVANVLRISTRYANLDLVEEIYGINLLPLATFALKYYRDDPCESFIPKVKEDDPAANQEVDLVSKMHKAITILQFKLEKEIIDRRPEFELEERLLLDKIDYEKGTIILNGTEYKLNDNNFPTIDPKDPYKLTEEESVLIDKLVYSFVNSDKLQKHVRFLFSKGNMYLKFNSNLLFHGCIPLDDDGNLKSMWIQGEEYESKRLLEKFDSLSREGYFEKVGSEEKTYGMDIMWYLWTGPVSPLFGKKKMATFERYFIDDEIAHIEQKTGYYKLRDREEMCDMILREFGLDPSESRIINGHVPVKKKNGESPIKANGKMIVIDGGFSKAYQKQTGIAGYTLIYNSYGLQLVSHEHFSSTEESIMKEKDILSTTLVVEQKLKRKTVEDTDIGKELQVQIKDLKELLLIYRKGIIKEIR.

This sequence belongs to the FBPase class 3 family. It depends on Mn(2+) as a cofactor.

It carries out the reaction beta-D-fructose 1,6-bisphosphate + H2O = beta-D-fructose 6-phosphate + phosphate. It participates in carbohydrate biosynthesis; gluconeogenesis. This chain is Fructose-1,6-bisphosphatase class 3, found in Clostridium botulinum (strain Alaska E43 / Type E3).